The following is a 26-amino-acid chain: Dermaseptin-J2 (26 aa).

Residue V26 is modified to Valine amide.

In terms of tissue distribution, expressed by the skin glands.

It is found in the secreted. In terms of biological role, has antimicrobial activity. The chain is Dermaseptin-J2 from Phasmahyla jandaia (Jandaia leaf frog).